We begin with the raw amino-acid sequence, 243 residues long: Carboxy-S-adenosyl-L-methionine synthase (243 aa).

S-adenosyl-L-methionine is bound by residues Tyr40, 65 to 67 (GCS), 90 to 91 (DN), 118 to 119 (DI), Asn133, and Arg200.

The protein belongs to the class I-like SAM-binding methyltransferase superfamily. Cx-SAM synthase family. Homodimer.

The catalysed reaction is prephenate + S-adenosyl-L-methionine = carboxy-S-adenosyl-L-methionine + 3-phenylpyruvate + H2O. Catalyzes the conversion of S-adenosyl-L-methionine (SAM) to carboxy-S-adenosyl-L-methionine (Cx-SAM). This Shewanella loihica (strain ATCC BAA-1088 / PV-4) protein is Carboxy-S-adenosyl-L-methionine synthase.